The primary structure comprises 184 residues: MAAPWTGALLLLLASQAVSSAQALDEEEVPEGWVLLHVVQGQVGAGNYSYLRLNHEGKIVLRMRSLRGDADLYVSDSTLHPSFDEYELQSATCGADAVSIPAHFRRPVGIGVYGHRSHLESAFEMKVYYDATLEPHPFGETAYSDGTDASRKHAYAPEDASQEEESVLWTILISILKLVLEILF.

Residues 1–23 (MAAPWTGALLLLLASQAVSSAQA) form the signal peptide. Asparagine 47 is a glycosylation site (N-linked (GlcNAc...) asparagine).

The protein belongs to the UPF0669 family.

It is found in the secreted. Functionally, may be involved in induction of apoptosis in CD4(+) T-cells, but not CD8(+) T-cells or hepatocytes. This is UPF0669 protein C6orf120 homolog from Bos taurus (Bovine).